Consider the following 148-residue polypeptide: Large ribosomal subunit protein bL9 (148 aa).

It belongs to the bacterial ribosomal protein bL9 family.

In terms of biological role, binds to the 23S rRNA. This chain is Large ribosomal subunit protein bL9, found in Ectopseudomonas mendocina (strain ymp) (Pseudomonas mendocina).